A 316-amino-acid chain; its full sequence is Pantothenate kinase (316 aa).

95–102 (GSVAVGKS) is an ATP binding site.

This sequence belongs to the prokaryotic pantothenate kinase family.

It localises to the cytoplasm. It carries out the reaction (R)-pantothenate + ATP = (R)-4'-phosphopantothenate + ADP + H(+). It functions in the pathway cofactor biosynthesis; coenzyme A biosynthesis; CoA from (R)-pantothenate: step 1/5. The sequence is that of Pantothenate kinase from Shewanella loihica (strain ATCC BAA-1088 / PV-4).